The following is a 284-amino-acid chain: 2-dehydro-3-deoxyphosphooctonate aldolase (284 aa).

It belongs to the KdsA family.

The protein localises to the cytoplasm. The catalysed reaction is D-arabinose 5-phosphate + phosphoenolpyruvate + H2O = 3-deoxy-alpha-D-manno-2-octulosonate-8-phosphate + phosphate. Its pathway is carbohydrate biosynthesis; 3-deoxy-D-manno-octulosonate biosynthesis; 3-deoxy-D-manno-octulosonate from D-ribulose 5-phosphate: step 2/3. It participates in bacterial outer membrane biogenesis; lipopolysaccharide biosynthesis. In Methylobacterium radiotolerans (strain ATCC 27329 / DSM 1819 / JCM 2831 / NBRC 15690 / NCIMB 10815 / 0-1), this protein is 2-dehydro-3-deoxyphosphooctonate aldolase.